The sequence spans 488 residues: Proline--tRNA ligase (488 aa).

The protein belongs to the class-II aminoacyl-tRNA synthetase family. ProS type 3 subfamily. Homodimer.

The protein localises to the cytoplasm. The catalysed reaction is tRNA(Pro) + L-proline + ATP = L-prolyl-tRNA(Pro) + AMP + diphosphate. Its function is as follows. Catalyzes the attachment of proline to tRNA(Pro) in a two-step reaction: proline is first activated by ATP to form Pro-AMP and then transferred to the acceptor end of tRNA(Pro). The protein is Proline--tRNA ligase of Borrelia garinii subsp. bavariensis (strain ATCC BAA-2496 / DSM 23469 / PBi) (Borreliella bavariensis).